A 748-amino-acid polypeptide reads, in one-letter code: Polyribonucleotide nucleotidyltransferase (748 aa).

2 residues coordinate Mg(2+): Asp487 and Asp493. The 60-residue stretch at 554–613 (PSTTTIKIDKDKIRDIIGPGGKVIKEICETSGAKIDISDDGTVSVYASDRDKLKVALDKI) folds into the KH domain. In terms of domain architecture, S1 motif spans 623 to 691 (GEIFNGTVVK…NKGKAKLTIK (69 aa)). The tract at residues 691 to 748 (KNADKDKSSNNTKPKTNVNNTKDNSEPEQRRDSSKKRAWNEDNNAETAEVITERKYFN) is disordered. Low complexity predominate over residues 699 to 712 (SNNTKPKTNVNNTK). Basic and acidic residues predominate over residues 713 to 722 (DNSEPEQRRD).

Belongs to the polyribonucleotide nucleotidyltransferase family. Requires Mg(2+) as cofactor.

The protein localises to the cytoplasm. The enzyme catalyses RNA(n+1) + phosphate = RNA(n) + a ribonucleoside 5'-diphosphate. In terms of biological role, involved in mRNA degradation. Catalyzes the phosphorolysis of single-stranded polyribonucleotides processively in the 3'- to 5'-direction. This Rickettsia africae (strain ESF-5) protein is Polyribonucleotide nucleotidyltransferase.